The sequence spans 105 residues: Met repressor (105 aa).

Belongs to the MetJ family. As to quaternary structure, homodimer.

It localises to the cytoplasm. Functionally, this regulatory protein, when combined with SAM (S-adenosylmethionine) represses the expression of the methionine regulon and of enzymes involved in SAM synthesis. The protein is Met repressor of Proteus mirabilis (strain HI4320).